The following is a 494-amino-acid chain: UPF0371 protein spyM18_1356 (494 aa).

It belongs to the UPF0371 family.

This is UPF0371 protein spyM18_1356 from Streptococcus pyogenes serotype M18 (strain MGAS8232).